Here is a 378-residue protein sequence, read N- to C-terminus: tRNA-specific 2-thiouridylase MnmA (378 aa).

ATP contacts are provided by residues 9 to 16 and Met-35; that span reads GVSGGVDS. An interaction with target base in tRNA region spans residues 94 to 96; sequence NPD. The active-site Nucleophile is Cys-99. Cys-99 and Cys-195 form a disulfide bridge. Gly-123 is an ATP binding site. The interaction with tRNA stretch occupies residues 145 to 147; it reads KDQ. The active-site Cysteine persulfide intermediate is Cys-195. The interaction with tRNA stretch occupies residues 307–308; sequence RY.

This sequence belongs to the MnmA/TRMU family.

The protein resides in the cytoplasm. The catalysed reaction is S-sulfanyl-L-cysteinyl-[protein] + uridine(34) in tRNA + AH2 + ATP = 2-thiouridine(34) in tRNA + L-cysteinyl-[protein] + A + AMP + diphosphate + H(+). In terms of biological role, catalyzes the 2-thiolation of uridine at the wobble position (U34) of tRNA, leading to the formation of s(2)U34. This Xanthomonas oryzae pv. oryzae (strain PXO99A) protein is tRNA-specific 2-thiouridylase MnmA.